The chain runs to 250 residues: Ribosomal RNA small subunit methyltransferase J (250 aa).

S-adenosyl-L-methionine contacts are provided by residues 101 to 102 (RD), 117 to 118 (ER), 153 to 154 (SS), and Asp-171.

The protein belongs to the methyltransferase superfamily. RsmJ family.

It localises to the cytoplasm. The catalysed reaction is guanosine(1516) in 16S rRNA + S-adenosyl-L-methionine = N(2)-methylguanosine(1516) in 16S rRNA + S-adenosyl-L-homocysteine + H(+). In terms of biological role, specifically methylates the guanosine in position 1516 of 16S rRNA. The chain is Ribosomal RNA small subunit methyltransferase J from Cronobacter sakazakii (strain ATCC BAA-894) (Enterobacter sakazakii).